The sequence spans 239 residues: Superoxide dismutase [Mn] 3 (239 aa).

Positions 1 to 19 (ASTQQTPAQSPTASPTVST) are enriched in polar residues. The tract at residues 1–20 (ASTQQTPAQSPTASPTVSTP) is disordered. The first 30 residues, 1–30 (ASTQQTPAQSPTASPTVSTPVAYVDRPLTA), serve as a signal peptide directing secretion. Positions 57, 112, 195, and 199 each coordinate Mn(2+).

Belongs to the iron/manganese superoxide dismutase family. As to quaternary structure, homodimer. Mn(2+) serves as cofactor.

The catalysed reaction is 2 superoxide + 2 H(+) = H2O2 + O2. Functionally, destroys superoxide anion radicals which are normally produced within the cells and which are toxic to biological systems. This chain is Superoxide dismutase [Mn] 3 (sodA3), found in Leptolyngbya boryana (Plectonema boryanum).